The sequence spans 156 residues: ATP synthase subunit b (156 aa).

A helical membrane pass occupies residues 5–27 (ITLIGQMITFAIFIGFTMKFVWP).

Belongs to the ATPase B chain family. In terms of assembly, F-type ATPases have 2 components, F(1) - the catalytic core - and F(0) - the membrane proton channel. F(1) has five subunits: alpha(3), beta(3), gamma(1), delta(1), epsilon(1). F(0) has three main subunits: a(1), b(2) and c(10-14). The alpha and beta chains form an alternating ring which encloses part of the gamma chain. F(1) is attached to F(0) by a central stalk formed by the gamma and epsilon chains, while a peripheral stalk is formed by the delta and b chains.

It is found in the cell inner membrane. Its function is as follows. F(1)F(0) ATP synthase produces ATP from ADP in the presence of a proton or sodium gradient. F-type ATPases consist of two structural domains, F(1) containing the extramembraneous catalytic core and F(0) containing the membrane proton channel, linked together by a central stalk and a peripheral stalk. During catalysis, ATP synthesis in the catalytic domain of F(1) is coupled via a rotary mechanism of the central stalk subunits to proton translocation. In terms of biological role, component of the F(0) channel, it forms part of the peripheral stalk, linking F(1) to F(0). The chain is ATP synthase subunit b from Francisella tularensis subsp. holarctica (strain OSU18).